A 143-amino-acid polypeptide reads, in one-letter code: MLNIQEIMAIIPHRYPFLLIDRILELEPGQRAVGEKLVTINEPFFQGHFPAHPIMPGVLIVEALAQTGAVAALSLPENRGKIAFFAGIDGVRFRKPVYPGDTLRLEVRFDKMRRGIGKGTGVATVDGQVVCEGELMFALHVER.

The active site involves His-48.

It belongs to the thioester dehydratase family. FabZ subfamily.

The protein resides in the cytoplasm. It catalyses the reaction a (3R)-hydroxyacyl-[ACP] = a (2E)-enoyl-[ACP] + H2O. Functionally, involved in unsaturated fatty acids biosynthesis. Catalyzes the dehydration of short chain beta-hydroxyacyl-ACPs and long chain saturated and unsaturated beta-hydroxyacyl-ACPs. The polypeptide is 3-hydroxyacyl-[acyl-carrier-protein] dehydratase FabZ (Roseiflexus castenholzii (strain DSM 13941 / HLO8)).